We begin with the raw amino-acid sequence, 160 residues long: RNA pyrophosphohydrolase (160 aa).

The 145-residue stretch at 10–154 (PYRKCVGVVL…KRDVYEQVFD (145 aa)) folds into the Nudix hydrolase domain. A Nudix box motif is present at residues 44 to 65 (GGIEDGEDARTAALRELVEETG).

Belongs to the Nudix hydrolase family. RppH subfamily. It depends on a divalent metal cation as a cofactor.

In terms of biological role, accelerates the degradation of transcripts by removing pyrophosphate from the 5'-end of triphosphorylated RNA, leading to a more labile monophosphorylated state that can stimulate subsequent ribonuclease cleavage. This chain is RNA pyrophosphohydrolase, found in Dinoroseobacter shibae (strain DSM 16493 / NCIMB 14021 / DFL 12).